A 246-amino-acid chain; its full sequence is Serine protease 1 (246 aa).

A signal peptide spans 1–15 (MSALLILALVGAAVA). The propeptide at 16 to 23 (FPLEDDDK) is activation peptide. In terms of domain architecture, Peptidase S1 spans 24–244 (IVGGYTCPEH…FVGWIQDTIA (221 aa)). 6 disulfide bridges follow: cysteine 30–cysteine 160, cysteine 48–cysteine 64, cysteine 132–cysteine 233, cysteine 139–cysteine 206, cysteine 171–cysteine 185, and cysteine 196–cysteine 220. The active-site Charge relay system is the histidine 63. Ca(2+) contacts are provided by glutamate 75, asparagine 77, valine 80, and glutamate 85. The active-site Charge relay system is the aspartate 107. Serine 200 serves as the catalytic Charge relay system.

This sequence belongs to the peptidase S1 family. In terms of assembly, interacts with SERPINA1. Requires Ca(2+) as cofactor.

Its subcellular location is the secreted. The protein resides in the extracellular space. The catalysed reaction is Preferential cleavage: Arg-|-Xaa, Lys-|-Xaa.. The polypeptide is Serine protease 1 (Rattus norvegicus (Rat)).